Consider the following 416-residue polypeptide: Iron/alpha-ketoglutarate-dependent dioxygenase asqJ (416 aa).

The tract at residues M1–D53 is disordered. Over residues S34–T50 the composition is skewed to polar residues. Fe cation-binding residues include H242, D244, and H319.

It belongs to the PhyH family. Homodimer. Fe cation serves as cofactor.

It carries out the reaction (-)-4'-methoxycyclopeptine + 2-oxoglutarate + O2 = (Z)-4'-methoxydehydrocyclopeptine + succinate + CO2 + H2O. The enzyme catalyses (Z)-4'-methoxydehydrocyclopeptine + 2-oxoglutarate + O2 = (-)-4'-methoxycyclopenine + succinate + CO2. The catalysed reaction is (-)-cyclopeptine + 2-oxoglutarate + O2 = (Z)-dehydrocyclopeptine + succinate + CO2 + H2O. It catalyses the reaction (Z)-dehydrocyclopeptine + 2-oxoglutarate + O2 = (-)-cyclopenine + succinate + CO2. It functions in the pathway secondary metabolite biosynthesis. Its pathway is alkaloid biosynthesis. The protein operates within mycotoxin biosynthesis. Functionally, iron/alpha-ketoglutarate-dependent dioxygenase; part of the gene cluster that mediates the biosynthesis of the aspoquinolone mycotoxins. Within the pathway, the iron/alpha-ketoglutarate-dependent dioxygenase asqJ acts as a (-)-cyclopenine synthase that converts 4'-methoxycyclopeptin into 4'-methoxydehydrocyclopeptin through dehydrogenation to form a double bond between C-alpha and C-beta of the O-methyltyrosine side chain. AsqJ is a very unique dioxygenase which is capable of catalyzing radical-mediated dehydrogenation and epoxidation reactions sequentially on a 6,7-benzo-diazepinedione substrate in the 4'-methoxyviridicatin biosynthetic pathway. AsqJ is also capable of converting cyclopeptin into dehydrocyclopeptin. The first step of the pathway is catalyzed by the nonribosomal peptide synthetase asqK that condenses anthranilic acid and O-methyl-L-tyrosine to produce 4'-methoxycyclopeptin. 4'-methoxycyclopeptin is then converted to 4'-methoxydehydrocyclopeptin by the ketoglutarate-dependent dioxygenase asqJ. AsqJ also converts its first product 4'-methoxydehydrocyclopeptin to 4'-methoxycyclopenin. The following conversion of 4'-methoxycyclopenin into 4'-methoxyviridicatin is catalyzed by the cyclopenase asqI. 4'-methoxyviridicatin is the precursor of quinolone natural products, and is further converted to quinolinone B. The prenyltransferase asqH1 then catalyzes the canonical Friedel-Crafts alkylation of quinolinone B with dimethylallyl cation to yield dimethylallyl quinolone, which is subjected to FAD-dependent dehydrogenation by the FAD-linked oxidoreductase asqF to yield conjugated aryl diene. The delta(3') double bond then serves as the site of the second alkylation with DMAPP catalyzed by the prenyltransferase asqH2 to yield a carbenium ion intermediate, which can be attacked by H(2)O to yield a styrenyl quinolone containing a C3'-hydroxyprenyl chain. The FAD-dependent monooxygenase asqG performs epoxidation of the terminal C7'-C8' olefin. Finally, after dehydratation of the epoxide at C3 by asqC, the quinolone epoxide rearrangement protein asqO catalyzes an enzymatic 3-exo-tet cyclization to yield the cyclopropyl-THF ring system in aspoquinolone. The sequence is that of Iron/alpha-ketoglutarate-dependent dioxygenase asqJ from Emericella nidulans (strain FGSC A4 / ATCC 38163 / CBS 112.46 / NRRL 194 / M139) (Aspergillus nidulans).